The chain runs to 74 residues: Antimicrobial peptide HsAp4 (74 aa).

The first 21 residues, 1 to 21 (MSRRRILILVLVTMLVKTMAG), serve as a signal peptide directing secretion. Residues 22–33 (MESKWVETTYEI) constitute a propeptide that is removed on maturation. R65 bears the Arginine amide mark. Positions 69–74 (AISEQT) are excised as a propeptide.

This sequence belongs to the non-disulfide-bridged peptide (NDBP) superfamily. Medium-length antimicrobial peptide (group 3) family. In terms of tissue distribution, expressed by the venom gland.

It is found in the secreted. The protein resides in the target cell membrane. Functionally, possesses antimicrobial activity against both Gram-negative and Gram-positive bacteria, as well as against the fungus C.tropicalis. Also possesses a relatively high hemolytic activity. May act by disrupting the integrity of the bacterial cell membrane. The polypeptide is Antimicrobial peptide HsAp4 (Heterometrus spinifer (Asia giant forest scorpion)).